Here is a 361-residue protein sequence, read N- to C-terminus: Spermidine/putrescine import ATP-binding protein PotA (361 aa).

Residues 4 to 234 (LEIKNVVKRF…PKNRFVADFL (231 aa)) form the ABC transporter domain. 36–43 (GPSGCGKT) is an ATP binding site.

It belongs to the ABC transporter superfamily. Spermidine/putrescine importer (TC 3.A.1.11.1) family. The complex is composed of two ATP-binding proteins (PotA), two transmembrane proteins (PotB and PotC) and a solute-binding protein (PotD).

The protein localises to the cell inner membrane. The catalysed reaction is ATP + H2O + polyamine-[polyamine-binding protein]Side 1 = ADP + phosphate + polyamineSide 2 + [polyamine-binding protein]Side 1.. Functionally, part of the ABC transporter complex PotABCD involved in spermidine/putrescine import. Responsible for energy coupling to the transport system. The chain is Spermidine/putrescine import ATP-binding protein PotA from Chromobacterium violaceum (strain ATCC 12472 / DSM 30191 / JCM 1249 / CCUG 213 / NBRC 12614 / NCIMB 9131 / NCTC 9757 / MK).